The primary structure comprises 80 residues: Diphthamide biosynthesis protein 3 (80 aa).

The 57-residue stretch at 4–60 (FHDEVEIEDFEFDEEKDVYHYPCPCGDRFEIPREMLEMGEDVAQCPSCSLLIRVIYD) folds into the DPH-type MB domain. Fe cation contacts are provided by cysteine 26, cysteine 28, cysteine 48, and cysteine 51.

Belongs to the DPH3 family. Component of the 2-(3-amino-3-carboxypropyl)histidine synthase complex composed of dph-1, dph-2, dph-3 and a NADH-dependent reductase. Fe(2+) is required as a cofactor.

The enzyme catalyses [3Fe-4S](1+)-[protein] + Fe(2+)-[Dph3] = [3Fe-4S](0)-[protein] + Fe(3+)-[Dph3]. The catalysed reaction is 2 [3Fe-4S](0)-[protein] + 2 Fe(2+)-[Dph3] + NADH = 2 [4Fe-4S](1+)-[protein] + 2 [Dph3] + NAD(+) + H(+). It participates in protein modification; peptidyl-diphthamide biosynthesis. In terms of biological role, required for the first step of diphthamide biosynthesis, a post-translational modification of histidine which occurs in elongation factor 2. Dph-1 and dph-2 transfer a 3-amino-3-carboxypropyl (ACP) group from S-adenosyl-L-methionine (SAM) to a histidine residue, the reaction is assisted by a reduction system comprising dph-3 and a NADH-dependent reductase. Acts as an electron donor to reduce the Fe-S cluster in dph1-dph2 keeping the [4Fe-4S] clusters in the active and reduced state. Restores iron to dph-1-dph-2 iron-sulfur clusters which have degraded from [4Fe-4S] to [3Fe-4S] by donating an iron atom to reform [4Fe-4S] clusters, in a manner dependent on the presence of elongation factor 2 and SAM. Associates with the elongator complex and is required for tRNA Wobble base modifications mediated by the elongator complex. The elongator complex is required for multiple tRNA modifications, including mcm5U (5-methoxycarbonylmethyl uridine), mcm5s 2U (5-methoxycarbonylmethyl-2-thiouridine), and ncm5U (5-carbamoylmethyl uridine). In Caenorhabditis elegans, this protein is Diphthamide biosynthesis protein 3.